Here is a 539-residue protein sequence, read N- to C-terminus: Efflux pump roqT (539 aa).

The tract at residues 1–25 (MEKEVATDPLPQEIPSDAPDEGGSL) is disordered. Transmembrane regions (helical) follow at residues 36–56 (VSLTIALCLGVFCMSLDVTII), 108–128 (LFLFEVGSLVCGVTPTSVGLI), 133–153 (IAGLGAGGLFSGSLLIIAQTV), 160–180 (VFTALLGSMYGIASVAGPPLG), 191–211 (WCFYINLPIGAVTAAFVLFFF), 233–253 (IGSFFFLPAIVCLLLALQWGG), 262–282 (RIIVLFVLTGVLLLAFVAVQI), 305–325 (WFAITLNGAYFVFIYYLPIWF), 338–360 (VMNLPSIIAVVVVSIISGMLVTI), 362–384 (GYYNPVMIMSSVTLSIGAGLLST), 395–415 (IGYQILMGLGVGLGMQQPFMV), and 502–522 (AFYVGVALASLSCIGTIALEW).

The protein belongs to the major facilitator superfamily. TCR/Tet family.

It localises to the membrane. Its function is as follows. Efflux pump; part of the gene cluster that mediates the biosynthesis of the mycotoxins roquefortine C and meleagrin. The protein is Efflux pump roqT of Penicillium rubens (strain ATCC 28089 / DSM 1075 / NRRL 1951 / Wisconsin 54-1255) (Penicillium chrysogenum).